The primary structure comprises 652 residues: Small ribosomal subunit protein mS39 (652 aa).

The N-terminal 37 residues, 1–37 (MYLSRQLRLLPRANIACSLSSSGAHYTTAAPAEDAPI), are a transit peptide targeting the mitochondrion. 5 PPR repeats span residues 129–163 (DSVVDETSLAQLISQGELKDAVLVYNLLEQKGNPI), 225–259 (TPQSYASLIRGMAKYLQCERAYALLQEAGEKQVQL), 260–299 (DTNTFNSVIEIVSFLKDTAEQRWQLCKDLLNEMSQQKLRP), 300–338 (NLGTLNAVLQCISTFGNFKVARAAALQALPEFKQLGVNP), and 547–581 (TGQMLGDILTLLVRGGSYEKATEVFAHIDKNQHRI).

The protein belongs to the mitochondrion-specific ribosomal protein mS39 family.

The protein localises to the mitochondrion. Its function is as follows. Mitochondrial protein that may have a role in mitochondrial translation. Essential for larval development. The polypeptide is Small ribosomal subunit protein mS39 (Drosophila melanogaster (Fruit fly)).